The following is a 336-amino-acid chain: MLYRLARAGFFQLDAEKAHDLAIQNFKRFTGTPIDLFYRQQLPNRPVECMGLTFRNPVGLAAGLDKNGECIEAFDAMGFGFVEVGTVTPRAQSGNDKPRLFRLVGAEGIINRMGFNNLGVDNLIENVKKAKYSCVLGINIGKNKDTPIEKGAEDYLICMEKVYEYAGYIAVNISSPNTPGLRTLQYGEALDELLVELKRKQAELEEKHGKYVPLALKIAPDLTDDEISQICQSLINNKIDGVIATNTTLDRTMVEGMKHAQEAGGLSGRPLQSRSTEVVRLLRKELQGNIPIIGVGGVDSYVAAKEKMLAGADLVQVYSGFIYHGPGLVRDIVKNL.

FMN-binding positions include 62 to 66 and T86; that span reads AGLDK. K66 lines the substrate pocket. Substrate is bound at residue 111-115; that stretch reads NRMGF. Residues N139 and N172 each coordinate FMN. N172 serves as a coordination point for substrate. S175 serves as the catalytic Nucleophile. N177 contributes to the substrate binding site. FMN-binding residues include K217 and T245. 246 to 247 is a binding site for substrate; the sequence is NT. Residues G268, G297, and 318–319 contribute to the FMN site; that span reads YS.

It belongs to the dihydroorotate dehydrogenase family. Type 2 subfamily. In terms of assembly, monomer. Requires FMN as cofactor.

The protein localises to the cell membrane. It catalyses the reaction (S)-dihydroorotate + a quinone = orotate + a quinol. It functions in the pathway pyrimidine metabolism; UMP biosynthesis via de novo pathway; orotate from (S)-dihydroorotate (quinone route): step 1/1. Its function is as follows. Catalyzes the conversion of dihydroorotate to orotate with quinone as electron acceptor. This is Dihydroorotate dehydrogenase (quinone) from Vibrio vulnificus (strain CMCP6).